Reading from the N-terminus, the 85-residue chain is Protein MANBAL (85 aa).

A helical membrane pass occupies residues 24–44 (YGLFLGAIFQLICVLAIIVPI). Over residues 49–64 (EAEAEQAEPRSAEGPK) the composition is skewed to basic and acidic residues. Positions 49–85 (EAEAEQAEPRSAEGPKKPKAAIASTNKRPKKETKKKR) are disordered. The span at 75–85 (KRPKKETKKKR) shows a compositional bias: basic residues.

This sequence belongs to the UPF0239 family.

It is found in the membrane. The chain is Protein MANBAL (Manbal) from Mus musculus (Mouse).